Reading from the N-terminus, the 351-residue chain is NAD-dependent protein deacetylase SIR2rp1 (351 aa).

Positions 10–325 (HVVGEPTFEG…RSFAQALGFG (316 aa)) constitute a Deacetylase sirtuin-type domain. NAD(+)-binding positions include 37-57 (GAGI…TGLY) and 122-125 (QNID). His142 serves as the catalytic Proton acceptor. Residues Cys150, Cys153, Cys174, and Cys177 each coordinate Zn(2+). NAD(+)-binding positions include 213–215 (GTS) and 238–240 (NLE). Residues 260–284 (SSYRLSTGNGNGSKISSGDSSNSSS) are disordered. Low complexity predominate over residues 265 to 284 (STGNGNGSKISSGDSSNSSS). Cys311 serves as a coordination point for NAD(+).

It belongs to the sirtuin family. Class I subfamily. Zn(2+) serves as cofactor.

It localises to the nucleus. The protein localises to the chromosome. The protein resides in the telomere. It catalyses the reaction N(6)-acetyl-L-lysyl-[protein] + NAD(+) + H2O = 2''-O-acetyl-ADP-D-ribose + nicotinamide + L-lysyl-[protein]. In terms of biological role, NAD-dependent protein deacetylase, which is involved in repression of RNA polymerase I-mediated expression immediately adjacent to telomeres. It is however not involved in antigenic variation and subtelomeric variant surface glycoprotein (VSG) gene silencing. Plays a role in DNA damage response. Also has ADP-ribosylation activity in vitro. The sequence is that of NAD-dependent protein deacetylase SIR2rp1 (SIR2rp1) from Trypanosoma brucei brucei (strain 927/4 GUTat10.1).